A 388-amino-acid polypeptide reads, in one-letter code: Alanine racemase (388 aa).

Lys39 serves as the catalytic Proton acceptor; specific for D-alanine. Residue Lys39 is modified to N6-(pyridoxal phosphate)lysine. N6-carboxylysine is present on Lys129. Residue Arg136 participates in substrate binding. Catalysis depends on Tyr265, which acts as the Proton acceptor; specific for L-alanine. Met312 is a binding site for substrate.

The protein belongs to the alanine racemase family. As to quaternary structure, homodimer. It depends on pyridoxal 5'-phosphate as a cofactor.

It carries out the reaction L-alanine = D-alanine. Its pathway is amino-acid biosynthesis; D-alanine biosynthesis; D-alanine from L-alanine: step 1/1. Inhibited by acetate and propionate. Irreversibly inhibited by cycloserine. Its function is as follows. Catalyzes the interconversion of L-alanine and D-alanine. Also weakly active on serine. In Geobacillus stearothermophilus (Bacillus stearothermophilus), this protein is Alanine racemase (alr).